The chain runs to 130 residues: Protein ApaG (130 aa).

The 125-residue stretch at 3–127 (RAVTRHIEVT…FSLDSPDGKR (125 aa)) folds into the ApaG domain.

This Bradyrhizobium sp. (strain ORS 278) protein is Protein ApaG.